The chain runs to 127 residues: Holo-[acyl-carrier-protein] synthase (127 aa).

The Mg(2+) site is built by aspartate 8 and glutamate 60.

The protein belongs to the P-Pant transferase superfamily. AcpS family. Requires Mg(2+) as cofactor.

Its subcellular location is the cytoplasm. It carries out the reaction apo-[ACP] + CoA = holo-[ACP] + adenosine 3',5'-bisphosphate + H(+). Its function is as follows. Transfers the 4'-phosphopantetheine moiety from coenzyme A to a Ser of acyl-carrier-protein. The sequence is that of Holo-[acyl-carrier-protein] synthase from Marinomonas sp. (strain MWYL1).